Consider the following 91-residue polypeptide: UPF0250 protein PputGB1_4855 (91 aa).

Belongs to the UPF0250 family.

In Pseudomonas putida (strain GB-1), this protein is UPF0250 protein PputGB1_4855.